Reading from the N-terminus, the 359-residue chain is uncharacterized protein (359 aa).

Residues methionine 1–threonine 15 form the signal peptide. The region spanning isoleucine 212 to glutamine 359 is the N-acetyltransferase domain.

This is an uncharacterized protein from Mycobacterium leprae (strain TN).